Reading from the N-terminus, the 424-residue chain is Protein pellino (424 aa).

The segment at 1–21 (MVKRTDGTESPILAEDGGDGH) is disordered. Ser-10 carries the post-translational modification Phosphoserine.

It belongs to the pellino family. In terms of assembly, interacts with pll.

In terms of biological role, scaffold protein involved in the Toll signaling pathway via its interaction with pelle/pll kinase. This Drosophila melanogaster (Fruit fly) protein is Protein pellino (Pli).